The following is a 492-amino-acid chain: Ketol-acid reductoisomerase (NADP(+)) (492 aa).

One can recognise a KARI N-terminal Rossmann domain in the interval 14 to 208 (LDQLGRCRFM…GGHKAGVLES (195 aa)). Residues 45–48 (CGAQ), R68, R76, S78, and 108–110 (DKQ) each bind NADP(+). H132 is a catalytic residue. G158 provides a ligand contact to NADP(+). KARI C-terminal knotted domains lie at 209-344 (SFVA…NAPK) and 345-485 (YDGK…MTDM). D217, E221, E389, and E393 together coordinate Mg(2+). Residue S414 participates in substrate binding.

It belongs to the ketol-acid reductoisomerase family. The cofactor is Mg(2+).

The catalysed reaction is (2R)-2,3-dihydroxy-3-methylbutanoate + NADP(+) = (2S)-2-acetolactate + NADPH + H(+). The enzyme catalyses (2R,3R)-2,3-dihydroxy-3-methylpentanoate + NADP(+) = (S)-2-ethyl-2-hydroxy-3-oxobutanoate + NADPH + H(+). It functions in the pathway amino-acid biosynthesis; L-isoleucine biosynthesis; L-isoleucine from 2-oxobutanoate: step 2/4. It participates in amino-acid biosynthesis; L-valine biosynthesis; L-valine from pyruvate: step 2/4. Functionally, involved in the biosynthesis of branched-chain amino acids (BCAA). Catalyzes an alkyl-migration followed by a ketol-acid reduction of (S)-2-acetolactate (S2AL) to yield (R)-2,3-dihydroxy-isovalerate. In the isomerase reaction, S2AL is rearranged via a Mg-dependent methyl migration to produce 3-hydroxy-3-methyl-2-ketobutyrate (HMKB). In the reductase reaction, this 2-ketoacid undergoes a metal-dependent reduction by NADPH to yield (R)-2,3-dihydroxy-isovalerate. The chain is Ketol-acid reductoisomerase (NADP(+)) from Haemophilus influenzae (strain 86-028NP).